The sequence spans 76 residues: Translation initiation factor IF-1 (76 aa).

The S1-like domain maps to 1-76; it reads MEDMAKKDGV…TRGRIVYRYK (76 aa).

Belongs to the IF-1 family. As to quaternary structure, component of the 30S ribosomal translation pre-initiation complex which assembles on the 30S ribosome in the order IF-2 and IF-3, IF-1 and N-formylmethionyl-tRNA(fMet); mRNA recruitment can occur at any time during PIC assembly.

The protein localises to the cytoplasm. Functionally, one of the essential components for the initiation of protein synthesis. Stabilizes the binding of IF-2 and IF-3 on the 30S subunit to which N-formylmethionyl-tRNA(fMet) subsequently binds. Helps modulate mRNA selection, yielding the 30S pre-initiation complex (PIC). Upon addition of the 50S ribosomal subunit IF-1, IF-2 and IF-3 are released leaving the mature 70S translation initiation complex. The polypeptide is Translation initiation factor IF-1 (Renibacterium salmoninarum (strain ATCC 33209 / DSM 20767 / JCM 11484 / NBRC 15589 / NCIMB 2235)).